A 108-amino-acid chain; its full sequence is Class I hydrophobin 3 (108 aa).

The N-terminal stretch at 1-17 (MFSRVFAVASLAALALA) is a signal peptide. Intrachain disulfides connect Cys26–Cys87, Cys33–Cys81, Cys34–Cys67, and Cys88–Cys101.

It belongs to the fungal hydrophobin family. Self-assembles to form functional amyloid fibrils called rodlets. Self-assembly into fibrillar rodlets occurs spontaneously at hydrophobic:hydrophilic interfaces and the rodlets further associate laterally to form amphipathic monolayers.

The protein localises to the secreted. The protein resides in the cell wall. Functionally, aerial growth, conidiation, and dispersal of filamentous fungi in the environment rely upon a capability of their secreting small amphipathic proteins called hydrophobins (HPBs) with low sequence identity. Class I can self-assemble into an outermost layer of rodlet bundles on aerial cell surfaces, conferring cellular hydrophobicity that supports fungal growth, development and dispersal; whereas Class II form highly ordered films at water-air interfaces through intermolecular interactions but contribute nothing to the rodlet structure. The sequence is that of Class I hydrophobin 3 from Pisolithus tinctorius (Dead man's foot).